The sequence spans 426 residues: Enolase (426 aa).

Residue glutamine 162 coordinates (2R)-2-phosphoglycerate. Catalysis depends on glutamate 204, which acts as the Proton donor. Residues aspartate 241, glutamate 284, and aspartate 311 each coordinate Mg(2+). Positions 336, 365, 366, and 387 each coordinate (2R)-2-phosphoglycerate. Lysine 336 serves as the catalytic Proton acceptor.

It belongs to the enolase family. Component of the RNA degradosome, a multiprotein complex involved in RNA processing and mRNA degradation. Mg(2+) serves as cofactor.

The protein localises to the cytoplasm. It is found in the secreted. The protein resides in the cell surface. It catalyses the reaction (2R)-2-phosphoglycerate = phosphoenolpyruvate + H2O. It participates in carbohydrate degradation; glycolysis; pyruvate from D-glyceraldehyde 3-phosphate: step 4/5. Catalyzes the reversible conversion of 2-phosphoglycerate (2-PG) into phosphoenolpyruvate (PEP). It is essential for the degradation of carbohydrates via glycolysis. The protein is Enolase of Hydrogenovibrio crunogenus (strain DSM 25203 / XCL-2) (Thiomicrospira crunogena).